Consider the following 485-residue polypeptide: Ribulose bisphosphate carboxylase large chain (485 aa).

Positions 1-2 (MS) are excised as a propeptide. Proline 3 is subject to N-acetylproline. Lysine 14 carries the post-translational modification N6,N6,N6-trimethyllysine. Substrate is bound by residues asparagine 123 and threonine 173. The Proton acceptor role is filled by lysine 175. Position 177 (lysine 177) interacts with substrate. Lysine 201, aspartate 203, and glutamate 204 together coordinate Mg(2+). Residue lysine 201 is modified to N6-carboxylysine. Residue histidine 294 is the Proton acceptor of the active site. Positions 295, 327, and 379 each coordinate substrate.

This sequence belongs to the RuBisCO large chain family. Type I subfamily. Heterohexadecamer of 8 large chains and 8 small chains; disulfide-linked. The disulfide link is formed within the large subunit homodimers. Requires Mg(2+) as cofactor. In terms of processing, the disulfide bond which can form in the large chain dimeric partners within the hexadecamer appears to be associated with oxidative stress and protein turnover.

Its subcellular location is the plastid. The protein resides in the chloroplast. It carries out the reaction 2 (2R)-3-phosphoglycerate + 2 H(+) = D-ribulose 1,5-bisphosphate + CO2 + H2O. The enzyme catalyses D-ribulose 1,5-bisphosphate + O2 = 2-phosphoglycolate + (2R)-3-phosphoglycerate + 2 H(+). RuBisCO catalyzes two reactions: the carboxylation of D-ribulose 1,5-bisphosphate, the primary event in carbon dioxide fixation, as well as the oxidative fragmentation of the pentose substrate in the photorespiration process. Both reactions occur simultaneously and in competition at the same active site. The polypeptide is Ribulose bisphosphate carboxylase large chain (Flaveria pringlei).